Reading from the N-terminus, the 910-residue chain is Epithelial discoidin domain-containing receptor 1 (910 aa).

An N-terminal signal peptide occupies residues 1–19 (MGTGTLSSLLLLLLLVTIG). At 22 to 414 (DMKGHFDPAK…VAKAEGSPTA (393 aa)) the chain is on the extracellular side. The region spanning 32 to 186 (CRYALGMQDR…VCLRVELYGC (155 aa)) is the F5/8 type C domain. 2 disulfides stabilise this stretch: cysteine 32/cysteine 186 and cysteine 75/cysteine 178. Residues 193-368 (LSYTAPVGQT…LFSEISFISD (176 aa)) form a DS-like domain region. Residues asparagine 212, glutamine 231, aspartate 234, valine 236, tyrosine 254, and tyrosine 256 each coordinate Ca(2+). Asparagine 212 is a glycosylation site (N-linked (GlcNAc...) asparagine). Asparagine 261 is a glycosylation site (N-linked (GlcNAc...) asparagine). The cysteines at positions 304 and 349 are disulfide-linked. Residues serine 361 and glutamate 362 each contribute to the Ca(2+) site. Asparagine 371 and asparagine 391 each carry an N-linked (GlcNAc...) asparagine glycan. A helical membrane pass occupies residues 415–435 (ILIGCLVAIILLLLLIIALML). Residues 436–910 (WRLHWRRLLS…FLADDALNTV (475 aa)) lie on the Cytoplasmic side of the membrane. The segment at 467-494 (ILINNRPGPREPPPYQEPRPRGTPTHSA) is disordered. Residues 478–481 (PPPY) carry the PPxY motif motif. Phosphotyrosine; by autocatalysis is present on residues tyrosine 481, tyrosine 510, and tyrosine 517. Residues 607–902 (LRFKEKLGEG…PPFSQLHRFL (296 aa)) enclose the Protein kinase domain. ATP contacts are provided by residues 613–621 (LGEGQFGEV) and lysine 652. At tyrosine 737 the chain carries Phosphotyrosine; by autocatalysis. Catalysis depends on aspartate 763, which acts as the Proton acceptor. A phosphotyrosine; by autocatalysis mark is found at tyrosine 789, tyrosine 793, and tyrosine 794.

It belongs to the protein kinase superfamily. Tyr protein kinase family. Insulin receptor subfamily. As to quaternary structure, homodimer. Interacts (via PPxY motif) with WWC1 (via WW domains) in a collagen-regulated manner. Forms a tripartite complex with WWC1 and PRKCZ, but predominantly in the absence of collagen. Interacts (tyrosine phosphorylated) with SHC1. Interacts with SRC. Interacts with MYH9. Interacts with CDH1. Interacts with PTPN11. Interacts with NCK2. Post-translationally, autophosphorylated in response to fibrillar collagen binding. As to expression, various embryonic and adult tissues; also proliferative zones of the developing brain; hippocampal neurons.

It localises to the cell membrane. The catalysed reaction is L-tyrosyl-[protein] + ATP = O-phospho-L-tyrosyl-[protein] + ADP + H(+). Its function is as follows. Tyrosine kinase that functions as a cell surface receptor for fibrillar collagen and regulates cell attachment to the extracellular matrix, remodeling of the extracellular matrix, cell migration, differentiation, survival and cell proliferation. Collagen binding triggers a signaling pathway that involves SRC and leads to the activation of MAP kinases. Regulates remodeling of the extracellular matrix by up-regulation of the matrix metalloproteinases MMP2, MMP7 and MMP9, and thereby facilitates cell migration and wound healing. Promotes smooth muscle cell migration, and thereby contributes to arterial wound healing. Also plays a role in tumor cell invasion. Phosphorylates PTPN11. Required for normal blastocyst implantation during pregnancy, for normal mammary gland differentiation and normal lactation. Required for normal ear morphology and normal hearing. The protein is Epithelial discoidin domain-containing receptor 1 (Ddr1) of Rattus norvegicus (Rat).